Consider the following 93-residue polypeptide: Protein FptB (93 aa).

The signal sequence occupies residues 1 to 25 (MPRQSGFGWAWRVPLALAGSLAAAT). Transmembrane regions (helical) follow at residues 44–64 (LYAG…GGLL) and 71–91 (FAWR…LLAG).

The protein resides in the cell membrane. Its function is as follows. May play some role in transport of Fe(3+)-pyochelin. The sequence is that of Protein FptB (fptB) from Pseudomonas aeruginosa (strain ATCC 15692 / DSM 22644 / CIP 104116 / JCM 14847 / LMG 12228 / 1C / PRS 101 / PAO1).